A 308-amino-acid chain; its full sequence is Testis-expressed protein 52 (308 aa).

In terms of tissue distribution, expressed in Testis.

The polypeptide is Testis-expressed protein 52 (Mus musculus (Mouse)).